A 308-amino-acid chain; its full sequence is Elongation factor Ts (308 aa).

Residues 80–83 (TDFV) form an involved in Mg(2+) ion dislocation from EF-Tu region.

It belongs to the EF-Ts family.

It is found in the cytoplasm. Associates with the EF-Tu.GDP complex and induces the exchange of GDP to GTP. It remains bound to the aminoacyl-tRNA.EF-Tu.GTP complex up to the GTP hydrolysis stage on the ribosome. The protein is Elongation factor Ts of Rhodopseudomonas palustris (strain BisB18).